We begin with the raw amino-acid sequence, 441 residues long: Ribosomal protein uS12 methylthiotransferase RimO (441 aa).

Residues 8–118 (PKIGFVSLGC…VLQHVHHYVP (111 aa)) enclose the MTTase N-terminal domain. 6 residues coordinate [4Fe-4S] cluster: cysteine 17, cysteine 53, cysteine 82, cysteine 150, cysteine 154, and cysteine 157. The 238-residue stretch at 136–373 (LTPRHYAYLK…MQLQQQISAE (238 aa)) folds into the Radical SAM core domain. In terms of domain architecture, TRAM spans 376–441 (QEKVGREILV…DEYDLWGSRV (66 aa)).

This sequence belongs to the methylthiotransferase family. RimO subfamily. [4Fe-4S] cluster is required as a cofactor.

It localises to the cytoplasm. It catalyses the reaction L-aspartate(89)-[ribosomal protein uS12]-hydrogen + (sulfur carrier)-SH + AH2 + 2 S-adenosyl-L-methionine = 3-methylsulfanyl-L-aspartate(89)-[ribosomal protein uS12]-hydrogen + (sulfur carrier)-H + 5'-deoxyadenosine + L-methionine + A + S-adenosyl-L-homocysteine + 2 H(+). Catalyzes the methylthiolation of an aspartic acid residue of ribosomal protein uS12. The chain is Ribosomal protein uS12 methylthiotransferase RimO from Salmonella heidelberg (strain SL476).